A 341-amino-acid chain; its full sequence is 4-amino-5-hydroxymethyl-2-methylpyrimidine phosphate synthase (341 aa).

Lys-62 is modified (N6-(pyridoxal phosphate)lysine). Residue His-66 is part of the active site. 115–118 (GEFG) contributes to the pyridoxal 5'-phosphate binding site. Positions 195 to 199 (CCCFC) match the CCCFC; essential for catalytic activity, may be the site of iron coordination motif.

It belongs to the NMT1/THI5 family. In terms of assembly, homodimer. The cofactor is Fe cation.

The catalysed reaction is N(6)-(pyridoxal phosphate)-L-lysyl-[4-amino-5-hydroxymethyl-2-methylpyrimidine phosphate synthase] + L-histidyl-[4-amino-5-hydroxymethyl-2-methylpyrimidine phosphate synthase] + 2 Fe(3+) + 4 H2O = L-lysyl-[4-amino-5-hydroxymethyl-2-methylpyrimidine phosphate synthase] + (2S)-2-amino-5-hydroxy-4-oxopentanoyl-[4-amino-5-hydroxymethyl-2-methylpyrimidine phosphate synthase] + 4-amino-2-methyl-5-(phosphooxymethyl)pyrimidine + 3-oxopropanoate + 2 Fe(2+) + 2 H(+). Its pathway is cofactor biosynthesis; thiamine diphosphate biosynthesis. Responsible for the formation of the pyrimidine heterocycle in the thiamine biosynthesis pathway. Catalyzes the formation of hydroxymethylpyrimidine phosphate (HMP-P) from histidine and pyridoxal phosphate (PLP). The protein uses PLP and the active site histidine to form HMP-P, generating an inactive enzyme. The enzyme can only undergo a single turnover, which suggests it is a suicide enzyme. This chain is 4-amino-5-hydroxymethyl-2-methylpyrimidine phosphate synthase, found in Uromyces fabae (Rust fungus).